Reading from the N-terminus, the 149-residue chain is Calmodulin-1 (149 aa).

N-acetylalanine is present on Ala2. EF-hand domains are found at residues 8 to 43, 44 to 79, 81 to 116, and 117 to 149; these read EQIAEFKEAFSLFDKDGDGCITTKELGTVMRSLGQN, PTEAELQDMISEADADQNGTIDFPEFLNLMARKMKD, DSEEELKEAFKVFDKDQNGFISAAELRHVMTNLGEK, and LTDEEVDEMIREADIDGDGQVNYEEFVRMMLAK. The Ca(2+) site is built by Asp21, Asp23, Asp25, Cys27, Glu32, Asp57, Asp59, Asn61, Thr63, Glu68, Asp94, Asp96, Asn98, and Glu105. At Lys116 the chain carries N6,N6,N6-trimethyllysine. Ca(2+)-binding residues include Asp130, Asp132, Asp134, Gln136, and Glu141.

It belongs to the calmodulin family. As to expression, high expression in stolon tips and stems, moderate in roots, and very low in leaves. Localized in the meristematic regions of the shoot and root tips, the tip of the developing tuber and the vascular zones of petiole and tuber. Not detected in mesophyll cells.

Its function is as follows. Calmodulin mediates the control of a large number of enzymes, ion channels and other proteins by Ca(2+). Among the enzymes to be stimulated by the calmodulin-Ca(2+) complex are a number of protein kinases and phosphatases. In Solanum tuberosum (Potato), this protein is Calmodulin-1 (PCM1).